The following is a 296-amino-acid chain: NAD kinase (296 aa).

D78 functions as the Proton acceptor in the catalytic mechanism. NAD(+)-binding positions include D78–G79, N152–D153, R180, D182, and Q251.

It belongs to the NAD kinase family. A divalent metal cation is required as a cofactor.

Its subcellular location is the cytoplasm. The enzyme catalyses NAD(+) + ATP = ADP + NADP(+) + H(+). Functionally, involved in the regulation of the intracellular balance of NAD and NADP, and is a key enzyme in the biosynthesis of NADP. Catalyzes specifically the phosphorylation on 2'-hydroxyl of the adenosine moiety of NAD to yield NADP. This chain is NAD kinase, found in Neisseria gonorrhoeae (strain ATCC 700825 / FA 1090).